The following is a 414-amino-acid chain: Cyclin-B1-3 (414 aa).

This sequence belongs to the cyclin family. Cyclin AB subfamily. Expressed in roots, stems and flowers.

The chain is Cyclin-B1-3 (CYCB1-3) from Arabidopsis thaliana (Mouse-ear cress).